Reading from the N-terminus, the 530-residue chain is Nectin-2 (530 aa).

The N-terminal stretch at 1-31 is a signal peptide; sequence MARAAVLPPSRLSPTLPLLPLLLLLLQETGA. Residues 32 to 147 form the Ig-like V-type domain; sequence QDVRVRVLPE…NGTRRGVTWL (116 aa). Residues 32 to 351 lie on the Extracellular side of the membrane; sequence QDVRVRVLPE…STAGAGATGG (320 aa). Cysteines 54 and 131 form a disulfide. 2 N-linked (GlcNAc...) asparagine glycosylation sites follow: asparagine 128 and asparagine 138. 2 consecutive Ig-like C2-type domains span residues 153 to 247 and 252 to 337; these read PENH…VTLS and PEVS…VILV. 2 cysteine pairs are disulfide-bonded: cysteine 174-cysteine 229 and cysteine 274-cysteine 320. An N-linked (GlcNAc...) asparagine glycan is attached at asparagine 315. A helical membrane pass occupies residues 352-372; the sequence is IIGGIIAAIIATAVAGTGILI. The Cytoplasmic portion of the chain corresponds to 373-530; that stretch reads CRQQRKEQRL…DFFVSRAMYV (158 aa). Positions 382-407 are disordered; sequence LQAADEEEELEGPPSYKPPTPKAKLE. Threonine 401 carries the post-translational modification Phosphothreonine. Serine 424 carries the post-translational modification Phosphoserine.

Belongs to the nectin family. In terms of assembly, can form trans-heterodimers with NECTIN3. Interacts with CD226 or with PVRIG; these interactions are competitive and have a differential functional outcome on T-cell activation, either positive or negative, respectively. Binds with low affinity to TIGIT. In terms of tissue distribution, brain, spinal cord, spleen, kidney, heart and liver.

Its subcellular location is the cell membrane. Its function is as follows. Modulator of T-cell signaling. Can be either a costimulator of T-cell function, or a coinhibitor, depending on the receptor it binds to. Upon binding to CD226, stimulates T-cell proliferation and cytokine production, including that of IL2, IL5, IL10, IL13, and IFNG. Upon interaction with PVRIG, inhibits T-cell proliferation. These interactions are competitive. Probable cell adhesion protein. This Mus musculus (Mouse) protein is Nectin-2.